We begin with the raw amino-acid sequence, 206 residues long: Protein GET1 (206 aa).

At 1–4 (MPSL) the chain is on the lumenal side. The chain crosses the membrane as a helical span at residues 5–24 (LITALFLNVIIYVINTVGAA). Over 25–110 (TVDGLLWLLY…TFDITIKIAR (86 aa)) the chain is Cytoplasmic. Positions 75–100 (AKLRRRHDKALEAYEAKNNELTQSKS) form a coiled coil. A helical membrane pass occupies residues 111 to 131 (WAATSGLMLFLQFWYSKTPIF). The Lumenal segment spans residues 132–155 (TLPPGWIPWQVQWVLSFPRAPMGT). A helical transmembrane segment spans residues 156-172 (VSIQIWSGACATVVALV). Over 173–206 (GDAMKASLAYVSKPKIDRIKLGATMEGKEGKKRQ) the chain is Cytoplasmic.

The protein belongs to the WRB/GET1 family. As to quaternary structure, interacts with GET3.

It localises to the endoplasmic reticulum membrane. Required for the post-translational delivery of tail-anchored (TA) proteins to the endoplasmic reticulum. Acts as a membrane receptor for soluble GET3, which recognizes and selectively binds the transmembrane domain of TA proteins in the cytosol. This is Protein GET1 from Ajellomyces capsulatus (strain H143) (Darling's disease fungus).